Here is a 1133-residue protein sequence, read N- to C-terminus: Fas-binding factor 1 (1133 aa).

Disordered stretches follow at residues 89 to 198 (LGLK…TPIR) and 211 to 544 (IMAT…VPVQ). Residues 102-113 (AAKDPGKGELPN) show a composition bias toward basic and acidic residues. Over residues 125-134 (KKSLPSPSSS) the composition is skewed to low complexity. Residue Ser-142 is modified to Phosphoserine. Over residues 165–182 (PPVTQSKTASDKSPSTVR) the composition is skewed to polar residues. Composition is skewed to basic and acidic residues over residues 221 to 245 (PKAE…DELL) and 259 to 276 (TGEH…RPQD). Residues 277–286 (SEDMWGDEDF) show a composition bias toward acidic residues. Positions 295-310 (VVSSEGRQSRRQSVSR) are enriched in low complexity. Residues 325–336 (SKQSPPMASSPI) show a composition bias toward polar residues. Residues 415 to 424 (ASKEEKEDWL) show a composition bias toward basic and acidic residues. Positions 459-469 (SGSQPLTSTQG) are enriched in polar residues. Residues 473 to 482 (AAAGGSSGTT) show a composition bias toward low complexity. Coiled coils occupy residues 577-727 (AELQ…VDAA) and 773-870 (IRQR…EEQK). A Glycyl lysine isopeptide (Lys-Gly) (interchain with G-Cter in SUMO2) cross-link involves residue Lys-960. Residues 1062–1085 (AASSQSALMPPAPTTRWCSQPPTG) form a disordered region.

As to quaternary structure, may interact with FAS cytoplasmic domain. Interacts with PARD3. Interacts with TRAPPC14. As to expression, present in various epithelial cells (at protein level).

Its subcellular location is the cytoplasm. The protein localises to the cytoskeleton. It is found in the microtubule organizing center. The protein resides in the centrosome. It localises to the centriole. Its subcellular location is the spindle pole. The protein localises to the cell junction. Keratin-binding protein required for epithelial cell polarization. Involved in apical junction complex (AJC) assembly via its interaction with PARD3. Required for ciliogenesis. The polypeptide is Fas-binding factor 1 (FBF1) (Homo sapiens (Human)).